The sequence spans 83 residues: Glutaredoxin 3 (83 aa).

In terms of domain architecture, Glutaredoxin spans alanine 2–lysine 83. An intrachain disulfide couples cysteine 12 to cysteine 15.

Belongs to the glutaredoxin family. As to quaternary structure, monomer.

In terms of biological role, the disulfide bond functions as an electron carrier in the glutathione-dependent synthesis of deoxyribonucleotides by the enzyme ribonucleotide reductase. In addition, it is also involved in reducing some disulfides in a coupled system with glutathione reductase. The sequence is that of Glutaredoxin 3 (grxC) from Escherichia coli O157:H7.